A 359-amino-acid chain; its full sequence is 3-dehydroquinate synthase (359 aa).

Residues 106–110 (GVVGD), 130–131 (TS), Lys-143, and Lys-152 each bind NAD(+). Zn(2+) is bound by residues Glu-185, His-246, and His-263.

The protein belongs to the sugar phosphate cyclases superfamily. Dehydroquinate synthase family. Co(2+) serves as cofactor. It depends on Zn(2+) as a cofactor. NAD(+) is required as a cofactor.

Its subcellular location is the cytoplasm. It catalyses the reaction 7-phospho-2-dehydro-3-deoxy-D-arabino-heptonate = 3-dehydroquinate + phosphate. It participates in metabolic intermediate biosynthesis; chorismate biosynthesis; chorismate from D-erythrose 4-phosphate and phosphoenolpyruvate: step 2/7. In terms of biological role, catalyzes the conversion of 3-deoxy-D-arabino-heptulosonate 7-phosphate (DAHP) to dehydroquinate (DHQ). The protein is 3-dehydroquinate synthase of Clostridium kluyveri (strain ATCC 8527 / DSM 555 / NBRC 12016 / NCIMB 10680 / K1).